We begin with the raw amino-acid sequence, 439 residues long: Cell division protein DivIB (439 aa).

Disordered regions lie at residues M1–I96 and D119–V149. The Cytoplasmic segment spans residues M1–Y173. Positions E11–E20 are enriched in acidic residues. Positions T26–A38 are enriched in basic residues. Basic and acidic residues predominate over residues K64–N76. A compositionally biased stretch (low complexity) spans D77–N86. Residues N87–I96 show a composition bias toward acidic residues. The segment covering D119 to D133 has biased composition (polar residues). The chain crosses the membrane as a helical span at residues S174 to L194. The 69-residue stretch at S195–N263 folds into the POTRA domain. Residues S195–N439 are Extracellular-facing. The tract at residues Y396 to N439 is disordered. The segment covering E405–L424 has biased composition (basic and acidic residues). A compositionally biased stretch (polar residues) spans S426–N439.

It belongs to the FtsQ/DivIB family. DivIB subfamily.

The protein resides in the cell membrane. Cell division protein that may be involved in stabilizing or promoting the assembly of the division complex. This is Cell division protein DivIB from Staphylococcus aureus (strain NCTC 8325 / PS 47).